The chain runs to 750 residues: Glycerophosphodiester phosphodiesterase GDPDL7 (750 aa).

The N-terminal stretch at 1–17 (MLRFIIFFSLFIHLCVA) is a signal peptide. GP-PDE domains are found at residues 41-339 (PAVV…SQSI) and 355-654 (ALVI…TRYL). Residues Asn134, Asn304, Asn603, and Asn716 are each glycosylated (N-linked (GlcNAc...) asparagine).

Belongs to the glycerophosphoryl diester phosphodiesterase family. Expressed in flowers and siliques.

The enzyme catalyses a sn-glycero-3-phosphodiester + H2O = an alcohol + sn-glycerol 3-phosphate + H(+). The protein is Glycerophosphodiester phosphodiesterase GDPDL7 of Arabidopsis thaliana (Mouse-ear cress).